The sequence spans 522 residues: Peptide chain release factor 3 (522 aa).

Residues 10–277 (ASRKTFAIIS…TFVDFAPSPS (268 aa)) form the tr-type G domain. GTP contacts are provided by residues 19–26 (SHPDAGKT), 87–91 (DTPGH), and 141–144 (NKMD).

It belongs to the TRAFAC class translation factor GTPase superfamily. Classic translation factor GTPase family. PrfC subfamily.

It is found in the cytoplasm. Functionally, increases the formation of ribosomal termination complexes and stimulates activities of RF-1 and RF-2. It binds guanine nucleotides and has strong preference for UGA stop codons. It may interact directly with the ribosome. The stimulation of RF-1 and RF-2 is significantly reduced by GTP and GDP, but not by GMP. This chain is Peptide chain release factor 3, found in Listeria innocua serovar 6a (strain ATCC BAA-680 / CLIP 11262).